The sequence spans 152 residues: Small ribosomal subunit protein uS15 (152 aa).

Residues M1–R19 show a composition bias toward basic residues. Positions M1–T21 are disordered.

This sequence belongs to the universal ribosomal protein uS15 family. Part of the 30S ribosomal subunit.

This is Small ribosomal subunit protein uS15 from Methanocella arvoryzae (strain DSM 22066 / NBRC 105507 / MRE50).